Consider the following 374-residue polypeptide: Methylthioribose-1-phosphate isomerase (374 aa).

Residue D251 is the Proton donor of the active site.

This sequence belongs to the eIF-2B alpha/beta/delta subunits family. MtnA subfamily.

It is found in the cytoplasm. It localises to the nucleus. It carries out the reaction 5-(methylsulfanyl)-alpha-D-ribose 1-phosphate = 5-(methylsulfanyl)-D-ribulose 1-phosphate. It participates in amino-acid biosynthesis; L-methionine biosynthesis via salvage pathway; L-methionine from S-methyl-5-thio-alpha-D-ribose 1-phosphate: step 1/6. Functionally, catalyzes the interconversion of methylthioribose-1-phosphate (MTR-1-P) into methylthioribulose-1-phosphate (MTRu-1-P). The sequence is that of Methylthioribose-1-phosphate isomerase from Oryza sativa subsp. indica (Rice).